Consider the following 774-residue polypeptide: Probable E3 ubiquitin-protein ligase HECTD2 (774 aa).

Residues 1-51 (MSEAARDLSPGAPPAVAAAAPEERKGKEPEREKLPPIVTAGAAAGLDRGSK) form a disordered region. Serine 9 is modified (phosphoserine). Positions 21-34 (PEERKGKEPEREKL) are enriched in basic and acidic residues. The region spanning 435 to 774 (KRADLKKKLK…ISNSEGFGLE (340 aa)) is the HECT domain. Cysteine 742 (glycyl thioester intermediate) is an active-site residue.

The enzyme catalyses S-ubiquitinyl-[E2 ubiquitin-conjugating enzyme]-L-cysteine + [acceptor protein]-L-lysine = [E2 ubiquitin-conjugating enzyme]-L-cysteine + N(6)-ubiquitinyl-[acceptor protein]-L-lysine.. It participates in protein modification; protein ubiquitination. In terms of biological role, E3 ubiquitin-protein ligase which accepts ubiquitin from an E2 ubiquitin-conjugating enzyme in the form of a thioester and then directly transfers the ubiquitin to targeted substrates. This Mus musculus (Mouse) protein is Probable E3 ubiquitin-protein ligase HECTD2 (Hectd2).